The sequence spans 69 residues: uncharacterized protein (69 aa).

The tract at residues 22-48 (LFRKSRELSPIKPVRTPTPPAPTPPPM) is disordered. Over residues 37-48 (TPTPPAPTPPPM) the composition is skewed to pro residues.

This is an uncharacterized protein from Lepidoptera (butterflies and moths).